Reading from the N-terminus, the 172-residue chain is Adenine phosphoribosyltransferase (172 aa).

This sequence belongs to the purine/pyrimidine phosphoribosyltransferase family. In terms of assembly, homodimer.

It is found in the cytoplasm. It carries out the reaction AMP + diphosphate = 5-phospho-alpha-D-ribose 1-diphosphate + adenine. It participates in purine metabolism; AMP biosynthesis via salvage pathway; AMP from adenine: step 1/1. Catalyzes a salvage reaction resulting in the formation of AMP, that is energically less costly than de novo synthesis. This is Adenine phosphoribosyltransferase from Roseiflexus castenholzii (strain DSM 13941 / HLO8).